The primary structure comprises 323 residues: Homocysteine S-methyltransferase 1 (323 aa).

Residues 3-317 enclose the Hcy-binding domain; sequence VLEDLVARAG…STIRAVSKIL (315 aa). Positions 235, 302, and 303 each coordinate Zn(2+).

Monomer. It depends on Zn(2+) as a cofactor.

It carries out the reaction S-methyl-L-methionine + L-homocysteine = 2 L-methionine + H(+). Functionally, catalyzes methyl transfer from S-methylmethionine (SMM) to adenosyl-L-homocysteine (AdoMet). SMM degradation (by HMT-1, HMT-2, HMT-3 and HMT-4) and biosynthesis (by MMT1) constitute the SMM cycle in plants, which is probably required to achieve short term control of AdoMet level. The sequence is that of Homocysteine S-methyltransferase 1 (HMT-1) from Zea mays (Maize).